The primary structure comprises 300 residues: Aspartate carbamoyltransferase catalytic subunit (300 aa).

Carbamoyl phosphate is bound by residues R54 and T55. K82 contacts L-aspartate. The carbamoyl phosphate site is built by R104, H131, and Q134. Residues R164 and R213 each coordinate L-aspartate. Carbamoyl phosphate is bound by residues A256 and P257.

It belongs to the aspartate/ornithine carbamoyltransferase superfamily. ATCase family. As to quaternary structure, heterododecamer (2C3:3R2) of six catalytic PyrB chains organized as two trimers (C3), and six regulatory PyrI chains organized as three dimers (R2).

The catalysed reaction is carbamoyl phosphate + L-aspartate = N-carbamoyl-L-aspartate + phosphate + H(+). Its pathway is pyrimidine metabolism; UMP biosynthesis via de novo pathway; (S)-dihydroorotate from bicarbonate: step 2/3. Catalyzes the condensation of carbamoyl phosphate and aspartate to form carbamoyl aspartate and inorganic phosphate, the committed step in the de novo pyrimidine nucleotide biosynthesis pathway. This Malacoplasma penetrans (strain HF-2) (Mycoplasma penetrans) protein is Aspartate carbamoyltransferase catalytic subunit.